Here is a 74-residue protein sequence, read N- to C-terminus: Conotoxin AbVIH (74 aa).

Positions 1–17 are cleaved as a signal peptide; that stretch reads VLIIAVLFLTACQLTTA. The propeptide occupies 18 to 40; the sequence is ETSSRGKQKHRALRSTDKDSRMT. The tract at residues 19–40 is disordered; that stretch reads TSSRGKQKHRALRSTDKDSRMT. 3 disulfides stabilise this stretch: cysteine 43/cysteine 57, cysteine 50/cysteine 61, and cysteine 56/cysteine 68.

Belongs to the conotoxin O1 superfamily. Expressed by the venom duct.

Its subcellular location is the secreted. The sequence is that of Conotoxin AbVIH from Conus abbreviatus (Abbreviated cone).